The chain runs to 829 residues: Transcription activator GutR (829 aa).

Residues 42–61 (IDKIALQLGVSPNTIKSWIG) constitute a DNA-binding region (H-T-H motif). An ATP-binding site is contributed by 200-207 (GWAGMGKT). 3 TPR repeats span residues 697–730 (HRVL…SSTY), 736–769 (IEAY…KHNA), and 775–808 (IYYH…IDSW).

Its function is as follows. Activator of the glucitol dehydrogenase gene (gutB). The polypeptide is Transcription activator GutR (gutR) (Bacillus subtilis (strain 168)).